Reading from the N-terminus, the 79-residue chain is MKYRKQLLVLFFAYFLVVNESEAFLGSLFSIGSKLLPGVIKLFQRKKQRALMKRDLQDRMDPYQRNLKLDRYLKQLALD.

The N-terminal stretch at 1–23 is a signal peptide; the sequence is MKYRKQLLVLFFAYFLVVNESEA. The propeptide occupies 49–79; the sequence is RALMKRDLQDRMDPYQRNLKLDRYLKQLALD.

It belongs to the non-disulfide-bridged peptide (NDBP) superfamily. Medium-length antimicrobial peptide (group 3) family. Expressed by the venom gland.

It is found in the secreted. Its subcellular location is the target cell membrane. In terms of biological role, antimicrobial peptide that may act by disrupting the integrity of the bacterial cell membrane. Has antibacterial activity against Gram-negative bacterium E.coli NBRC 3972 (MIC=10 uM) and against Gram-positive bacteria S.aureus NBRC 13276 (MIC=2.5-5 uM) and B.subtilis NBRC 3009 (MIC=0.5-1 uM). Also shows potent activity against antibiotic-sensitive and -resistant Acinetobacter baumannii (MIC=1.8-3.6 uM). Shows cytolytic activity against human and sheep erythrocytes. Toxic to cricket A.domestica. In Isometrus maculatus (Lesser brown scorpion), this protein is Peptide Im-5.